Consider the following 174-residue polypeptide: Soma ferritin (174 aa).

In terms of domain architecture, Ferritin-like diiron spans 8–157 (QNYHAESEAG…DYITNLKRVG (150 aa)). Glu25, Glu60, His63, Glu105, and Gln139 together coordinate Fe cation.

This sequence belongs to the ferritin family. Oligomer of 12 or 24 subunits. The functional molecule is roughly spherical and contains a central cavity into which the polymeric mineral iron core is deposited. As to expression, expressed in somatic tissues but not in oocytes.

The protein localises to the cytoplasm. The enzyme catalyses 4 Fe(2+) + O2 + 4 H(+) = 4 Fe(3+) + 2 H2O. Its function is as follows. Stores iron in a soluble, non-toxic, readily available form. Important for iron homeostasis. Has ferroxidase activity. Iron is taken up in the ferrous form and deposited as ferric hydroxides after oxidation. This Lymnaea stagnalis (Great pond snail) protein is Soma ferritin.